Consider the following 430-residue polypeptide: Tol-Pal system protein TolB (430 aa).

An N-terminal signal peptide occupies residues 1–21 (MKQALRVAFGFLMLWAAVLHA).

It belongs to the TolB family. In terms of assembly, the Tol-Pal system is composed of five core proteins: the inner membrane proteins TolA, TolQ and TolR, the periplasmic protein TolB and the outer membrane protein Pal. They form a network linking the inner and outer membranes and the peptidoglycan layer.

It localises to the periplasm. In terms of biological role, part of the Tol-Pal system, which plays a role in outer membrane invagination during cell division and is important for maintaining outer membrane integrity. TolB occupies a key intermediary position in the Tol-Pal system because it communicates directly with both membrane-embedded components, Pal in the outer membrane and TolA in the inner membrane. This is Tol-Pal system protein TolB from Klebsiella pneumoniae (strain 342).